A 235-amino-acid chain; its full sequence is Sugar fermentation stimulation protein homolog (235 aa).

This sequence belongs to the SfsA family.

This Alkaliphilus oremlandii (strain OhILAs) (Clostridium oremlandii (strain OhILAs)) protein is Sugar fermentation stimulation protein homolog.